A 1151-amino-acid polypeptide reads, in one-letter code: ATP-dependent helicase/deoxyribonuclease subunit B (1151 aa).

In terms of domain architecture, UvrD-like helicase ATP-binding spans 1 to 273 (MALRLVLGRA…LALAAGVRVE (273 aa)). 8–15 (GRAGSGKT) serves as a coordination point for ATP. The region spanning 282 to 578 (PPRFREAPAL…KLRLIPPALD (297 aa)) is the UvrD-like helicase C-terminal domain. The [4Fe-4S] cluster site is built by Cys-788, Cys-1107, Cys-1110, and Cys-1116.

The protein belongs to the helicase family. AddB/RexB type 1 subfamily. In terms of assembly, heterodimer of AddA and AddB. Mg(2+) serves as cofactor. Requires [4Fe-4S] cluster as cofactor.

Functionally, the heterodimer acts as both an ATP-dependent DNA helicase and an ATP-dependent, dual-direction single-stranded exonuclease. Recognizes the chi site generating a DNA molecule suitable for the initiation of homologous recombination. The AddB subunit has 5' -&gt; 3' nuclease activity but not helicase activity. This chain is ATP-dependent helicase/deoxyribonuclease subunit B, found in Moorella thermoacetica (strain ATCC 39073 / JCM 9320).